Here is a 319-residue protein sequence, read N- to C-terminus: Cytochrome f (319 aa).

Residues 1-35 (MQKKDVCEYITKWVSVTISTLVTIGVLVFPLSSEA) form the signal peptide. Residues Y36, C56, C59, and H60 each coordinate heme. A helical membrane pass occupies residues 285-305 (IQGLLVFFASVVLAQIFLVLK).

This sequence belongs to the cytochrome f family. As to quaternary structure, the 4 large subunits of the cytochrome b6-f complex are cytochrome b6, subunit IV (17 kDa polypeptide, petD), cytochrome f and the Rieske protein, while the 4 small subunits are PetG, PetL, PetM and PetN. The complex functions as a dimer. Requires heme as cofactor.

Its subcellular location is the plastid. The protein localises to the chloroplast thylakoid membrane. Functionally, component of the cytochrome b6-f complex, which mediates electron transfer between photosystem II (PSII) and photosystem I (PSI), cyclic electron flow around PSI, and state transitions. This Zygnema circumcarinatum (Green alga) protein is Cytochrome f.